We begin with the raw amino-acid sequence, 280 residues long: Putative sugar uptake protein (280 aa).

The next 10 membrane-spanning stretches (helical) occupy residues 4 to 21, 33 to 52, 56 to 78, 91 to 113, 117 to 136, 149 to 166, 176 to 195, 207 to 229, 233 to 255, and 262 to 279; these read LIAL…LIAG, MGLG…IHPA, ITIF…GQFI, LSTG…EWTS, YLIG…LTAI, IILL…SSFP, LFLP…LLVS, WLNI…SAQL, ITAF…FFIG, and ELIA…GAAI.

Belongs to the GRP transporter (TC 2.A.7.5) family.

The protein resides in the cell membrane. The sequence is that of Putative sugar uptake protein from Lactobacillus helveticus (Lactobacillus suntoryeus).